Consider the following 233-residue polypeptide: Esterase FUS5 (233 aa).

Active-site charge relay system residues include S105, D159, and H187.

It belongs to the LovG family.

Functionally, esterase; part of the gene cluster that mediates the biosynthesis of the mycotoxin fusarin C. Within the cluster, FUS1, FUS2, FUS8 and FUS9 are sufficient for fusarin production. The other FUS cluster members are not essential for fusarin C biosynthesis. The sequence is that of Esterase FUS5 from Gibberella moniliformis (strain M3125 / FGSC 7600) (Maize ear and stalk rot fungus).